A 517-amino-acid polypeptide reads, in one-letter code: Bifunctional purine biosynthesis protein PurH (517 aa).

The 146-residue stretch at 1 to 146 (MAPIALLSVS…KNHAHVAVLT (146 aa)) folds into the MGS-like domain.

Belongs to the PurH family.

The catalysed reaction is (6R)-10-formyltetrahydrofolate + 5-amino-1-(5-phospho-beta-D-ribosyl)imidazole-4-carboxamide = 5-formamido-1-(5-phospho-D-ribosyl)imidazole-4-carboxamide + (6S)-5,6,7,8-tetrahydrofolate. The enzyme catalyses IMP + H2O = 5-formamido-1-(5-phospho-D-ribosyl)imidazole-4-carboxamide. The protein operates within purine metabolism; IMP biosynthesis via de novo pathway; 5-formamido-1-(5-phospho-D-ribosyl)imidazole-4-carboxamide from 5-amino-1-(5-phospho-D-ribosyl)imidazole-4-carboxamide (10-formyl THF route): step 1/1. Its pathway is purine metabolism; IMP biosynthesis via de novo pathway; IMP from 5-formamido-1-(5-phospho-D-ribosyl)imidazole-4-carboxamide: step 1/1. The polypeptide is Bifunctional purine biosynthesis protein PurH (Prochlorococcus marinus (strain MIT 9303)).